Here is a 301-residue protein sequence, read N- to C-terminus: Acetylglutamate kinase (301 aa).

Substrate is bound by residues 68-69 (GG), Arg90, and Asn195.

This sequence belongs to the acetylglutamate kinase family. ArgB subfamily.

It is found in the cytoplasm. The enzyme catalyses N-acetyl-L-glutamate + ATP = N-acetyl-L-glutamyl 5-phosphate + ADP. Its pathway is amino-acid biosynthesis; L-arginine biosynthesis; N(2)-acetyl-L-ornithine from L-glutamate: step 2/4. Its function is as follows. Catalyzes the ATP-dependent phosphorylation of N-acetyl-L-glutamate. In Pseudomonas fluorescens (strain SBW25), this protein is Acetylglutamate kinase.